Reading from the N-terminus, the 448-residue chain is Gametocyte surface protein P45/48 (448 aa).

The first 27 residues, 1-27, serve as a signal peptide directing secretion; it reads MMLYISAKKAQVAFILYIVLVLRIISG. Positions 45-182 constitute a 6-Cys 1 domain; it reads IGYKCNFSNE…AMVHVRVLKY (138 aa). Disulfide bonds link cysteine 49–cysteine 71 and cysteine 102–cysteine 156. Residues asparagine 50, asparagine 131, asparagine 190, asparagine 204, asparagine 254, asparagine 299, and asparagine 303 are each glycosylated (N-linked (GlcNAc...) asparagine). Residues 294-426 enclose the 6-Cys 2 domain; that stretch reads VIHGCNFSSN…KSAYMTVTID (133 aa). Disulfide bonds link cysteine 298-cysteine 327, cysteine 344-cysteine 412, and cysteine 352-cysteine 410. Aspartate 426 carries GPI-anchor amidated aspartate lipidation. The propeptide at 427-448 is removed in mature form; sequence SAYYGFLAKTFIFLIVAILLYI.

As to quaternary structure, heterodimer; heterodimerizes with PF230.

Its subcellular location is the cell surface. The protein localises to the cell membrane. Functionally, gametocyte surface protein required for male fertility. This chain is Gametocyte surface protein P45/48 (PF45/48), found in Plasmodium falciparum (isolate 3D7).